Here is a 290-residue protein sequence, read N- to C-terminus: Phosphate import ATP-binding protein PstB (290 aa).

An ABC transporter domain is found at 43 to 285; the sequence is MSVRNLNVYY…PEHELTEAYI (243 aa). Position 75-82 (75-82) interacts with ATP; it reads GPSGCGKS.

It belongs to the ABC transporter superfamily. Phosphate importer (TC 3.A.1.7) family. As to quaternary structure, the complex is composed of two ATP-binding proteins (PstB), two transmembrane proteins (PstC and PstA) and a solute-binding protein (PstS).

The protein resides in the cell inner membrane. It carries out the reaction phosphate(out) + ATP + H2O = ADP + 2 phosphate(in) + H(+). Functionally, part of the ABC transporter complex PstSACB involved in phosphate import. Responsible for energy coupling to the transport system. The chain is Phosphate import ATP-binding protein PstB from Pseudoalteromonas atlantica (strain T6c / ATCC BAA-1087).